We begin with the raw amino-acid sequence, 180 residues long: Probable chorismate pyruvate-lyase (180 aa).

Arg73, Leu111, and Glu170 together coordinate substrate.

The protein belongs to the UbiC family.

Its subcellular location is the cytoplasm. It catalyses the reaction chorismate = 4-hydroxybenzoate + pyruvate. Its pathway is cofactor biosynthesis; ubiquinone biosynthesis. In terms of biological role, removes the pyruvyl group from chorismate, with concomitant aromatization of the ring, to provide 4-hydroxybenzoate (4HB) for the ubiquinone pathway. The sequence is that of Probable chorismate pyruvate-lyase from Nitrosospira multiformis (strain ATCC 25196 / NCIMB 11849 / C 71).